The primary structure comprises 126 residues: Glycine cleavage system H protein (126 aa).

The Lipoyl-binding domain occupies T22–E104. K63 carries the N6-lipoyllysine modification.

This sequence belongs to the GcvH family. As to quaternary structure, the glycine cleavage system is composed of four proteins: P, T, L and H. (R)-lipoate is required as a cofactor.

In terms of biological role, the glycine cleavage system catalyzes the degradation of glycine. The H protein shuttles the methylamine group of glycine from the P protein to the T protein. Its function is as follows. Is also involved in protein lipoylation via its role as an octanoyl/lipoyl carrier protein intermediate. This chain is Glycine cleavage system H protein, found in Staphylococcus saprophyticus subsp. saprophyticus (strain ATCC 15305 / DSM 20229 / NCIMB 8711 / NCTC 7292 / S-41).